The following is a 258-amino-acid chain: UPF0246 protein Pnuc_0753 (258 aa).

The protein belongs to the UPF0246 family.

The sequence is that of UPF0246 protein Pnuc_0753 from Polynucleobacter asymbioticus (strain DSM 18221 / CIP 109841 / QLW-P1DMWA-1) (Polynucleobacter necessarius subsp. asymbioticus).